Consider the following 156-residue polypeptide: Rhombotin-1 (156 aa).

LIM zinc-binding domains are found at residues 22 to 84 (KGCA…LFGT) and 86 to 148 (GNCA…GHLN).

As to expression, expressed in the brain and not in the thymus.

The protein resides in the nucleus. Its function is as follows. May be involved in gene regulation within neural lineage cells potentially by direct DNA binding or by binding to other transcription factors. The chain is Rhombotin-1 (Lmo1) from Mus musculus (Mouse).